The following is a 1182-amino-acid chain: Rho GTPase-activating protein 20 (1182 aa).

The tract at residues 1 to 40 (MEAMSPQQDALGAQPGRSSSLTGMSRIAGGPGTKKKMKTL) is disordered. Serine 46 bears the Phosphoserine mark. A PH domain is found at 85–185 (TLLIDGPVEL…WLSLLQRYIA (101 aa)). Residues 194–283 (KSIPLKIFAK…TALLTQGSRD (90 aa)) enclose the Ras-associating domain. Residues 365 to 551 (VSLPDLCEND…FLIENCCRVF (187 aa)) form the Rho-GAP domain. Phosphoserine is present on residues serine 704 and serine 730. 6 disordered regions span residues 745–772 (QTQPQKKGDKVCLKQSSVTGTDVSKRNT), 803–839 (VASYSHGSSQDHPRKQAFDADPCRFSPPHLTDAQKSS), 935–955 (SYSSLSSPGSSPSGSSVSSQD), 982–1011 (TQRKQEELSSDFDSPSRLSGMPGPSMGQAS), 1074–1101 (LPSCASGTPEADSLQESQDDLQGDEGPG), and 1142–1182 (SGGQ…GTDI). The segment covering 758 to 772 (KQSSVTGTDVSKRNT) has biased composition (polar residues). Residues 811–824 (SQDHPRKQAFDADP) are compositionally biased toward basic and acidic residues.

Its function is as follows. GTPase activator for the Rho-type GTPases by converting them to an inactive GDP-bound state. The protein is Rho GTPase-activating protein 20 (Arhgap20) of Mus musculus (Mouse).